A 270-amino-acid chain; its full sequence is Myelin protein zero-like protein 1 (270 aa).

A signal peptide spans 1–35 (MAEAVGAVTLIAAPARRRWLWSALAAMLGLLTARI). One can recognise an Ig-like V-type domain in the interval 36–151 (SALEVHTPKE…DIVVRPGQIR (116 aa)). Residues 36–162 (SALEVHTPKE…HVVEIDNLLV (127 aa)) lie on the Extracellular side of the membrane. N-linked (GlcNAc...) asparagine glycans are attached at residues Asn-50 and Asn-130. Cys-58 and Cys-135 form a disulfide bridge. Residues 163 to 183 (FLVWVVVGTVTAVVLGLTLLI) form a helical membrane-spanning segment. The Cytoplasmic portion of the chain corresponds to 184–270 (SLVLVVLYRR…SVVYADIRKD (87 aa)). The interval 201–257 (TGCSTSERLSPVKQAPRKCPSDTEGLVKSPPSAGSHQGPVIYAQLDHSGGHHSGKIN) is disordered. Ser-204, Ser-206, Ser-210, and Ser-221 each carry phosphoserine. The ITIM motif 1 motif lies at 240–245 (VIYAQL). Tyr-242 carries the post-translational modification Phosphotyrosine. Residue Ser-261 is modified to Phosphoserine. The ITIM motif 2 motif lies at 262 to 267 (VVYADI). Tyr-264 is subject to Phosphotyrosine.

It belongs to the myelin P0 protein family. As to quaternary structure, interacts with phosphorylated PTPN11/SHP-2. Post-translationally, phosphorylated on tyrosine residues upon stimulation with pervanadate and concanavalin-A (ConA). Phosphorylation at Tyr-242 and Tyr-264 is required for interaction with PTPN11/SHP-2. Dephosphorylated by PTPN11/SHP-2 (in vitro). N-glycosylated.

The protein localises to the membrane. Cell surface receptor, which is involved in signal transduction processes. Recruits PTPN11/SHP-2 to the cell membrane and is a putative substrate of PTPN11/SHP-2. Is a major receptor for concanavalin-A (ConA) and is involved in cellular signaling induced by ConA, which probably includes Src family tyrosine-protein kinases. May be involved in regulation of integrin-mediated cell motility. The polypeptide is Myelin protein zero-like protein 1 (Mpzl1) (Rattus norvegicus (Rat)).